Consider the following 148-residue polypeptide: MASGVTVSDVCKTTYEEIKKDKKHRYVIFYIRDEKQIDVETVADRNAEYDQFLEDIQKCGPGECRYGLFDFEYMHQCQGTSESSKKQKLFLMSWCPDTAKVKKKMLYSSSFDALKKSLVGVQKYIQATDLSEASREAVEEKLRATDRQ.

In terms of domain architecture, ADF-H spans Gly-4–Arg-143. The short motif at Lys-19–Lys-23 is the Nuclear localization signal element.

This sequence belongs to the actin-binding proteins ADF family. Phosphorylated in vitro by protein kinase LIMK1. Phosphorylation is required for inactivation of tsr and for cell proliferation and axon growth. Phosphorylation is negatively regulated by the panthothenate kinase fbl which catalyzes the first step in the conversion of panthothenic acid to coenzyme A. In terms of processing, dephosphorylated by protein phosphatase ssh which activates tsr.

It is found in the cytoplasm. The protein resides in the cytoskeleton. It localises to the nucleus matrix. In terms of biological role, exhibits F-actin depolymerizing activity and regulates actin cytoskeleton dynamics. Required for cytokinesis in both mitotic and meiotic cells and for aster migration and separation. Promotes cell motility during ovary development and oogenesis. During larval development, required for the cell rearrangement needed for formation of terminal filaments which are stacks of somatic cells that are important for the initiation of ovarioles. Also required for border cell migration during oogenesis. During border cell migration, required for actin turnover and lamellipodial protrusion. Required for the establishment of planar cell polarity (PCP) where cells adopt a uniform orientation within the plane of an epithelium. During establishment of PCP, required for the redistribution of the PCP core proteins fz and stan/fmi to the proximodistal cell boundary. During pupal development, required for elongation of the retinal cell body and for rhabdomere morphogenesis. Required for mushroom body neuroblast proliferation and axon growth. Plays a role in the positive regulation of protein secretion. Plays a role in the regulation of nuclear localization of actin. Required for the maintenance of epithelial integrity by controlling cell junctions and is also necessary for cell survival and tissue growth through regulation of JNK and yki signaling. This is Cofilin/actin-depolymerizing factor homolog from Drosophila melanogaster (Fruit fly).